A 566-amino-acid polypeptide reads, in one-letter code: Urease subunit alpha (566 aa).

The 439-residue stretch at 128-566 (GGIDSHVHFI…LPMAQRYFLF (439 aa)) folds into the Urease domain. Residues histidine 133, histidine 135, and lysine 216 each coordinate Ni(2+). At lysine 216 the chain carries N6-carboxylysine. Substrate is bound at residue histidine 218. Residues histidine 245 and histidine 271 each contribute to the Ni(2+) site. The active-site Proton donor is histidine 319. Aspartate 359 is a binding site for Ni(2+).

This sequence belongs to the metallo-dependent hydrolases superfamily. Urease alpha subunit family. Heterotrimer of UreA (gamma), UreB (beta) and UreC (alpha) subunits. Three heterotrimers associate to form the active enzyme. Requires Ni cation as cofactor. Carboxylation allows a single lysine to coordinate two nickel ions.

It localises to the cytoplasm. The enzyme catalyses urea + 2 H2O + H(+) = hydrogencarbonate + 2 NH4(+). It participates in nitrogen metabolism; urea degradation; CO(2) and NH(3) from urea (urease route): step 1/1. The chain is Urease subunit alpha from Nitrosococcus oceani (strain ATCC 19707 / BCRC 17464 / JCM 30415 / NCIMB 11848 / C-107).